A 324-amino-acid polypeptide reads, in one-letter code: Holliday junction branch migration complex subunit RuvB (324 aa).

The tract at residues 1–180 is large ATPase domain (RuvB-L); sequence MKSISCGKEY…FGIPLHLEFY (180 aa). Residues I19, R20, G61, K64, T65, T66, 127–129, R170, Y180, and R217 contribute to the ATP site; that span reads EDF. A Mg(2+)-binding site is contributed by T65. The small ATPAse domain (RuvB-S) stretch occupies residues 181–251; that stretch reads SFEELVNIIK…VADSVLLKLG (71 aa). Positions 254–324 are head domain (RuvB-H); sequence KMGLNKLDMN…TDQAKEYLSL (71 aa). The DNA site is built by R307 and R312.

The protein belongs to the RuvB family. In terms of assembly, homohexamer. Forms an RuvA(8)-RuvB(12)-Holliday junction (HJ) complex. HJ DNA is sandwiched between 2 RuvA tetramers; dsDNA enters through RuvA and exits via RuvB. An RuvB hexamer assembles on each DNA strand where it exits the tetramer. Each RuvB hexamer is contacted by two RuvA subunits (via domain III) on 2 adjacent RuvB subunits; this complex drives branch migration. In the full resolvosome a probable DNA-RuvA(4)-RuvB(12)-RuvC(2) complex forms which resolves the HJ.

The protein localises to the cytoplasm. It catalyses the reaction ATP + H2O = ADP + phosphate + H(+). Functionally, the RuvA-RuvB-RuvC complex processes Holliday junction (HJ) DNA during genetic recombination and DNA repair, while the RuvA-RuvB complex plays an important role in the rescue of blocked DNA replication forks via replication fork reversal (RFR). RuvA specifically binds to HJ cruciform DNA, conferring on it an open structure. The RuvB hexamer acts as an ATP-dependent pump, pulling dsDNA into and through the RuvAB complex. RuvB forms 2 homohexamers on either side of HJ DNA bound by 1 or 2 RuvA tetramers; 4 subunits per hexamer contact DNA at a time. Coordinated motions by a converter formed by DNA-disengaged RuvB subunits stimulates ATP hydrolysis and nucleotide exchange. Immobilization of the converter enables RuvB to convert the ATP-contained energy into a lever motion, pulling 2 nucleotides of DNA out of the RuvA tetramer per ATP hydrolyzed, thus driving DNA branch migration. The RuvB motors rotate together with the DNA substrate, which together with the progressing nucleotide cycle form the mechanistic basis for DNA recombination by continuous HJ branch migration. Branch migration allows RuvC to scan DNA until it finds its consensus sequence, where it cleaves and resolves cruciform DNA. The sequence is that of Holliday junction branch migration complex subunit RuvB from Wolbachia sp. subsp. Drosophila simulans (strain wRi).